The following is a 320-amino-acid chain: Cytochrome f (320 aa).

A signal peptide spans 1–36 (MKHTNSKQKLKDIINFCQAIFTLCIICLYQANISNS). 4 residues coordinate heme: tyrosine 37, cysteine 57, cysteine 60, and histidine 61. Residues 286–305 (LISFIFFSISVLISQLFFVL) form a helical membrane-spanning segment.

Belongs to the cytochrome f family. The 4 large subunits of the cytochrome b6-f complex are cytochrome b6, subunit IV (17 kDa polypeptide, petD), cytochrome f and the Rieske protein, while the 4 small subunits are PetG, PetL, PetM and PetN. The complex functions as a dimer. Requires heme as cofactor.

The protein resides in the plastid. The protein localises to the chloroplast thylakoid membrane. Its function is as follows. Component of the cytochrome b6-f complex, which mediates electron transfer between photosystem II (PSII) and photosystem I (PSI), cyclic electron flow around PSI, and state transitions. This is Cytochrome f (petA) from Cyanidium caldarium (Red alga).